A 191-amino-acid polypeptide reads, in one-letter code: Superoxide dismutase [Mn/Fe] (191 aa).

Fe(3+) contacts are provided by H27, H74, D157, and H161. Mn(2+) contacts are provided by H27, H74, D157, and H161.

The protein belongs to the iron/manganese superoxide dismutase family. As to quaternary structure, homodimer. The cofactor is Mn(2+). Fe(3+) is required as a cofactor.

The catalysed reaction is 2 superoxide + 2 H(+) = H2O2 + O2. Its activity is regulated as follows. Inhibited by hydrogen peroxide. Its function is as follows. Destroys superoxide anion radicals which are normally produced within the cells and which are toxic to biological systems. Catalyzes the dismutation of superoxide anion radicals into O2 and H2O2 by successive reduction and oxidation of the transition metal ion at the active site. The polypeptide is Superoxide dismutase [Mn/Fe] (sodB) (Porphyromonas gingivalis (strain ATCC BAA-308 / W83)).